The sequence spans 1308 residues: D-lysergyl-peptide-synthetase subunit 2 (1308 aa).

The tract at residues 261-658 is adenylation (A) domain; it reads EWCRRTPSAV…CRKSTQVKLR (398 aa). In terms of domain architecture, Carrier spans 803–871; sequence IEEAFQRFFA…ELSELARHTK (69 aa). Serine 835 bears the O-(pantetheine 4'-phosphoryl)serine mark. The interval 910 to 1299 is condensation (C) domain; the sequence is EDVYPCTPLQ…HAAPRTLIGD (390 aa).

The protein belongs to the NRP synthetase family.

It participates in alkaloid biosynthesis; ergot alkaloid biosynthesis. Its function is as follows. D-lysergyl-peptide-synthetase subunit 2; part of the gene cluster that mediates the biosynthesis of fungal ergot alkaloid. DmaW catalyzes the first step of ergot alkaloid biosynthesis by condensing dimethylallyl diphosphate (DMAP) and tryptophan to form 4-dimethylallyl-L-tryptophan. The second step is catalyzed by the methyltransferase easF that methylates 4-dimethylallyl-L-tryptophan in the presence of S-adenosyl-L-methionine, resulting in the formation of 4-dimethylallyl-L-abrine. The catalase easC and the FAD-dependent oxidoreductase easE then transform 4-dimethylallyl-L-abrine to chanoclavine-I which is further oxidized by EasD in the presence of NAD(+), resulting in the formation of chanoclavine-I aldehyde. Agroclavine dehydrogenase easG then mediates the conversion of chanoclavine-I aldehyde to agroclavine via a non-enzymatic adduct reaction: the substrate is an iminium intermediate that is formed spontaneously from chanoclavine-I aldehyde in the presence of glutathione. The presence of easA is not required to complete this reaction. Further conversion of agroclavine to paspalic acid is a two-step process involving oxidation of agroclavine to elymoclavine and of elymoclavine to paspalic acid, the second step being performed by the elymoclavine oxidase cloA. Paspalic acid is then further converted to D-lysergic acid. Ergopeptines are assembled from D-lysergic acid and three different amino acids by the D-lysergyl-peptide-synthetases composed each of a monomudular and a trimodular nonribosomal peptide synthetase subunit. LpsB and lpsC encode the monomodular subunits responsible for D-lysergic acid activation and incorporation into the ergopeptine backbone. LpsA1 and A2 subunits encode the trimodular nonribosomal peptide synthetase assembling the tripeptide portion of ergopeptines. LpsA1 is responsible for formation of the major ergopeptine, ergotamine, and lpsA2 for alpha-ergocryptine, the minor ergopeptine of the total alkaloid mixture elaborated by C.purpurea. D-lysergyl-tripeptides are assembled by the nonribosomal peptide synthetases and released as N-(D-lysergyl-aminoacyl)-lactams. Cyclolization of the D-lysergyl-tripeptides is performed by the Fe(2+)/2-ketoglutarate-dependent dioxygenase easH which introduces a hydroxyl group into N-(D-lysergyl-aminoacyl)-lactam at alpha-C of the aminoacyl residue followed by spontaneous condensation with the terminal lactam carbonyl group. The polypeptide is D-lysergyl-peptide-synthetase subunit 2 (Claviceps purpurea (Ergot fungus)).